Reading from the N-terminus, the 1050-residue chain is Transcription intermediary factor 1-alpha (1050 aa).

K7 participates in a covalent cross-link: Glycyl lysine isopeptide (Lys-Gly) (interchain with G-Cter in SUMO2). Positions 15–30 (ASAAASGGPSAAPSGE) are enriched in low complexity. Residues 15–44 (ASAAASGGPSAAPSGENEAESRQGPDSERG) are disordered. The span at 33 to 44 (AESRQGPDSERG) shows a compositional bias: basic and acidic residues. Residues 56-82 (CAVCHQNIQSRAPKLLPCLHSFCQRCL) form an RING-type zinc finger. The residue at position 101 (T101) is a Phosphothreonine. S110 carries the post-translational modification Phosphoserine. 2 consecutive B box-type zinc fingers follow at residues 158 to 211 (KSNQ…VSPE) and 218 to 259 (QRPV…YQFI). The Zn(2+) site is built by C163, C166, C187, and H200. A Glycyl lysine isopeptide (Lys-Gly) (interchain with G-Cter in SUMO2) cross-link involves residue K205. C223, H226, C246, and H251 together coordinate Zn(2+). Residue K276 forms a Glycyl lysine isopeptide (Lys-Gly) (interchain with G-Cter in SUMO2) linkage. Residues 289–359 (NQIQNRIIEV…AGLSKQLEHV (71 aa)) adopt a coiled-coil conformation. Residues 429–456 (ESQPQMPKQNPVVEQNSQPPSGLSSNQL) are disordered. Positions 431-456 (QPQMPKQNPVVEQNSQPPSGLSSNQL) are enriched in polar residues. Residues K436 and K458 each participate in a glycyl lysine isopeptide (Lys-Gly) (interchain with G-Cter in SUMO2) cross-link. Omega-N-methylarginine is present on R469. 2 stretches are compositionally biased toward low complexity: residues 476 to 490 (QVMAQRQQVQRRPAP) and 499 to 510 (QGPIQQPSISHQ). Residues 476–550 (QVMAQRQQVQ…PPNQNIPRQA (75 aa)) form a disordered region. Pro residues predominate over residues 526–535 (PNGPVLPPHP). K552 is covalently cross-linked (Glycyl lysine isopeptide (Lys-Gly) (interchain with G-Cter in SUMO2)). The segment at 571–594 (ISSGQGTPSTTNSTSSTPSSPTIT) is disordered. Positions 577–594 (TPSTTNSTSSTPSSPTIT) are enriched in low complexity. K641 is covalently cross-linked (Glycyl lysine isopeptide (Lys-Gly) (interchain with G-Cter in SUMO2)). The segment at 643-712 (TNIDHGQPRP…PAGADSTHKV (70 aa)) is disordered. Residues S654, S660, and S667 each carry the phosphoserine modification. The segment covering 654-666 (SNRTVQSPNSSVP) has biased composition (polar residues). The span at 685 to 707 (SPSASSVGSRGSSGSSSKPAGAD) shows a compositional bias: low complexity. Residues K702 and K711 each participate in a glycyl lysine isopeptide (Lys-Gly) (interchain with G-Cter in SUMO2) cross-link. Residue K723 forms a Glycyl lysine isopeptide (Lys-Gly) (interchain with G-Cter in SUMO1); alternate linkage. A Glycyl lysine isopeptide (Lys-Gly) (interchain with G-Cter in SUMO2); alternate cross-link involves residue K723. A Glycyl lysine isopeptide (Lys-Gly) (interchain with G-Cter in SUMO2) cross-link involves residue K741. S744 carries the post-translational modification Phosphoserine. The segment at 754–779 (NYPRSILTSLLLNSSQSSTSEETVLR) is nuclear receptor binding site (NRBS). The segment at 766 to 824 (NSSQSSTSEETVLRSDAPDSTGDQPGLHQDNSSNGKSEWLDPSQKSPLHVGETRKEDDP) is disordered. Phosphoserine; by ATM is present on S768. K801 participates in a covalent cross-link: Glycyl lysine isopeptide (Lys-Gly) (interchain with G-Cter in SUMO2). Phosphoserine is present on S808. K810 is covalently cross-linked (Glycyl lysine isopeptide (Lys-Gly) (interchain with G-Cter in SUMO2)). S811 carries the post-translational modification Phosphoserine. At T818 the chain carries Phosphothreonine. The segment at 826–873 (EDWCAVCQNGGELLCCEKCPKVFHLSCHVPTLTNFPSGEWICTFCRDL) adopts a PHD-type zinc-finger fold. The interaction with histone H3 that is not methylated at 'Lys-4' (H3K4me0) stretch occupies residues 834-840 (NGGELLC). A Glycyl lysine isopeptide (Lys-Gly) (interchain with G-Cter in SUMO2) cross-link involves residue K875. Residues 891–907 (KKKTEGLVKLTPIDKRK) carry the Nuclear localization signal motif. Positions 899-1004 (KLTPIDKRKC…NYFEELLKNL (106 aa)) constitute a Bromo domain. Residue K949 forms a Glycyl lysine isopeptide (Lys-Gly) (interchain with G-Cter in SUMO2) linkage. An interaction with histone H3 that is acetylated at 'Lys-23' (H3K23ac) region spans residues 979-980 (FN). Residue K992 forms a Glycyl lysine isopeptide (Lys-Gly) (interchain with G-Cter in SUMO2) linkage. Residues 1011–1026 (PKPEFRNESEDNKFSD) are compositionally biased toward basic and acidic residues. The interval 1011–1036 (PKPEFRNESEDNKFSDDSDDDFVQPR) is disordered. A phosphoserine mark is found at S1019, S1025, and S1028. Residue K1041 forms a Glycyl lysine isopeptide (Lys-Gly) (interchain with G-Cter in SUMO2) linkage. S1042 bears the Phosphoserine mark.

As to quaternary structure, interacts with CARM1, NCOA2/GRIP1, PML, KAT5/TIP60, BRD7, CBX1, CBX3 and CBX5. Part of a coactivator complex containing TRIM24, NCOA2 and CARM1. Interacts with NR3C2/MCR. Interacts with the ligand-binding domain of estrogen receptors (in vitro). Interaction with DNA-bound estrogen receptors requires the presence of estradiol. Interacts with AR and p53/TP53. Interacts (via bromo domain) with histone H3 (via N-terminus), provided that it is not methylated at 'Lys-4' (H3K4me0). Does not interact with histone H3 that is methylated at 'Lys-4' (H3K4me1, H3K4me2 or H3K4me3). Interacts (via bromo domain) with histone H3 (via N-terminus) that is acetylated at 'Lys-23' (H3K23ac). Has the highest affinity for histone H3 that is both unmodified at 'Lys-4' (H3K4me0) and acetylated at 'Lys-23' (H3K23ac). Has very low affinity for histone H3 that is methylated at 'Lys-9' (H3K9me), or acetylated at both 'Lys-9' (H3K9ac) and 'Lys-14' (H3K14ac), or acetylated at 'Lys-27' (H3K27ac) (in vitro). Interacts with TRIM16. Phosphorylated at Ser-768 by ATM kinase induces ubiquitination and degradation during DNA damage. Post-translationally, sumoylated. In terms of processing, undergoes ubiquitination-mediated degradation in response to DNA damage.

The protein localises to the nucleus. It localises to the cytoplasm. It is found in the mitochondrion. It carries out the reaction S-ubiquitinyl-[E2 ubiquitin-conjugating enzyme]-L-cysteine + [acceptor protein]-L-lysine = [E2 ubiquitin-conjugating enzyme]-L-cysteine + N(6)-ubiquitinyl-[acceptor protein]-L-lysine.. It functions in the pathway protein modification; protein ubiquitination. In terms of biological role, transcriptional coactivator that interacts with numerous nuclear receptors and coactivators and modulates the transcription of target genes. Interacts with chromatin depending on histone H3 modifications, having the highest affinity for histone H3 that is both unmodified at 'Lys-4' (H3K4me0) and acetylated at 'Lys-23' (H3K23ac). Has E3 protein-ubiquitin ligase activity. During the DNA damage response, participates in an autoregulatory feedback loop with TP53. Early in response to DNA damage, ATM kinase phosphorylates TRIM24 leading to its ubiquitination and degradation. After sufficient DNA repair has occurred, TP53 activates TRIM24 transcription, ultimately leading to TRIM24-mediated TP53 ubiquitination and degradation. Plays a role in the regulation of cell proliferation and apoptosis, at least in part via its effects on p53/TP53 levels. Up-regulates ligand-dependent transcription activation by AR, GCR/NR3C1, thyroid hormone receptor (TR) and ESR1. Modulates transcription activation by retinoic acid (RA) receptors, including RARA. Plays a role in regulating retinoic acid-dependent proliferation of hepatocytes. Also participates in innate immunity by mediating the specific 'Lys-63'-linked ubiquitination of TRAF3 leading to activation of downstream signal transduction of the type I IFN pathway. Additionally, negatively regulates NLRP3/CASP1/IL-1beta-mediated pyroptosis and cell migration probably by ubiquitinating NLRP3. This Homo sapiens (Human) protein is Transcription intermediary factor 1-alpha (TRIM24).